Reading from the N-terminus, the 438-residue chain is Gamma-glutamyl phosphate reductase (438 aa).

It belongs to the gamma-glutamyl phosphate reductase family.

The protein localises to the cytoplasm. The catalysed reaction is L-glutamate 5-semialdehyde + phosphate + NADP(+) = L-glutamyl 5-phosphate + NADPH + H(+). Its pathway is amino-acid biosynthesis; L-proline biosynthesis; L-glutamate 5-semialdehyde from L-glutamate: step 2/2. Functionally, catalyzes the NADPH-dependent reduction of L-glutamate 5-phosphate into L-glutamate 5-semialdehyde and phosphate. The product spontaneously undergoes cyclization to form 1-pyrroline-5-carboxylate. The polypeptide is Gamma-glutamyl phosphate reductase (Prochlorococcus marinus (strain MIT 9303)).